A 1066-amino-acid chain; its full sequence is Hemoglobin and hemoglobin-haptoglobin-binding protein C (1066 aa).

Residues M1–A24 form the signal peptide. Repeat copies occupy residues Q26 to N29, Q30 to N33, Q34 to N37, Q38 to N41, Q42 to N45, Q46 to N49, and Q50 to N53. Residues Q26–N53 form a 7 X 4 AA tandem repeats of Q-P-T-N region. The span at Q26–Q54 shows a compositional bias: low complexity. Positions Q26–N57 are disordered. The short motif at E63–S70 is the TonB box element. The 135-residue stretch at N66–K200 folds into the TBDR plug domain. A TBDR beta-barrel domain is found at D208–F1066. A TonB C-terminal box motif is present at residues N1049–F1066.

Belongs to the TonB-dependent receptor family. Hemoglobin/haptoglobin binding protein subfamily.

It is found in the cell outer membrane. Functionally, acts as a receptor for hemoglobin or the hemoglobin/haptoglobin complex of the human host and is required for heme uptake. This chain is Hemoglobin and hemoglobin-haptoglobin-binding protein C (hgpC), found in Haemophilus influenzae.